The sequence spans 100 residues: Protein MEN-8 (100 aa).

The first 33 residues, 1–33 (MANNMKSATFCKATWAIFLVALAILVQLKGSEA), serve as a signal peptide directing secretion. 4 cysteine pairs are disulfide-bonded: cysteine 38–cysteine 76, cysteine 48–cysteine 65, cysteine 66–cysteine 91, and cysteine 78–cysteine 98.

It belongs to the A9/FIL1 family.

The protein localises to the secreted. This chain is Protein MEN-8 (MEN-8), found in Silene latifolia (White campion).